Reading from the N-terminus, the 744-residue chain is Cullin-1 (744 aa).

Residues 674–736 (DRRYAIDASI…RDYLERDKDN (63 aa)) form the Cullin neddylation domain.

Belongs to the cullin family. As to quaternary structure, part of a SCF (SKP1-CUL1-F-box protein) E3 ubiquitin-protein ligase complex. Is able to form the SCF complex together with SKP1 and the rice black streaked dwarf virus RBSDV protein P7-2. Interacts with D3. Post-translationally, neddylated (rubylated). Deneddylation occurs upon interaction with the COP9 signalosome (CSN) complex. Expressed in dry seeds and coleoptiles.

Involved in ubiquitination and subsequent proteasomal degradation of target proteins. This chain is Cullin-1, found in Oryza sativa subsp. japonica (Rice).